We begin with the raw amino-acid sequence, 109 residues long: Cell division protein ZapA (109 aa).

A coiled-coil region spans residues 21-99 (PDQRDALNQA…IEQALLEQGR (79 aa)).

Belongs to the ZapA family. Type 1 subfamily. Homodimer. Interacts with FtsZ.

It is found in the cytoplasm. Functionally, activator of cell division through the inhibition of FtsZ GTPase activity, therefore promoting FtsZ assembly into bundles of protofilaments necessary for the formation of the division Z ring. It is recruited early at mid-cell but it is not essential for cell division. This is Cell division protein ZapA from Shigella boydii serotype 18 (strain CDC 3083-94 / BS512).